The sequence spans 325 residues: Beta-ketoacyl-[acyl-carrier-protein] synthase III (325 aa).

Catalysis depends on residues cysteine 119 and histidine 252. The ACP-binding stretch occupies residues 253–257; the sequence is QANIR. Asparagine 282 is a catalytic residue.

Belongs to the thiolase-like superfamily. FabH family. In terms of assembly, homodimer.

Its subcellular location is the cytoplasm. The enzyme catalyses malonyl-[ACP] + acetyl-CoA + H(+) = 3-oxobutanoyl-[ACP] + CO2 + CoA. It functions in the pathway lipid metabolism; fatty acid biosynthesis. In terms of biological role, catalyzes the condensation reaction of fatty acid synthesis by the addition to an acyl acceptor of two carbons from malonyl-ACP. Catalyzes the first condensation reaction which initiates fatty acid synthesis and may therefore play a role in governing the total rate of fatty acid production. Possesses both acetoacetyl-ACP synthase and acetyl transacylase activities. Its substrate specificity determines the biosynthesis of branched-chain and/or straight-chain of fatty acids. In Acidovorax ebreus (strain TPSY) (Diaphorobacter sp. (strain TPSY)), this protein is Beta-ketoacyl-[acyl-carrier-protein] synthase III.